Here is a 498-residue protein sequence, read N- to C-terminus: ATP synthase subunit beta, chloroplastic (498 aa).

Residue 172–179 participates in ATP binding; sequence GGAGVGKT.

Belongs to the ATPase alpha/beta chains family. As to quaternary structure, F-type ATPases have 2 components, CF(1) - the catalytic core - and CF(0) - the membrane proton channel. CF(1) has five subunits: alpha(3), beta(3), gamma(1), delta(1), epsilon(1). CF(0) has four main subunits: a(1), b(1), b'(1) and c(9-12).

The protein localises to the plastid. The protein resides in the chloroplast thylakoid membrane. It catalyses the reaction ATP + H2O + 4 H(+)(in) = ADP + phosphate + 5 H(+)(out). Its function is as follows. Produces ATP from ADP in the presence of a proton gradient across the membrane. The catalytic sites are hosted primarily by the beta subunits. The protein is ATP synthase subunit beta, chloroplastic of Magnolia tripetala (Umbrella-tree).